A 356-amino-acid polypeptide reads, in one-letter code: Heparan sulfate 2-O-sulfotransferase 1 (356 aa).

Residues 1–11 lie on the Cytoplasmic side of the membrane; that stretch reads MGLLRIMMPPK. The chain crosses the membrane as a helical; Signal-anchor for type II membrane protein span at residues 12–28; sequence LQLLAVVAFAVAMLFLE. Positions 24-51 form a coiled coil; sequence MLFLENQIQKLEESRAKLERAIARHEVR. Residues 29–356 are Lumenal-facing; it reads NQIQKLEESR…FYEKIYPKSN (328 aa). Residues Lys-83, Thr-84, Ala-85, Ser-86, Thr-87, and Ser-88 each coordinate adenosine 3',5'-bisphosphate. Asn-108 and Asn-127 each carry an N-linked (GlcNAc...) asparagine glycan. Catalysis depends on residues His-140 and His-142. Positions 164 and 172 each coordinate adenosine 3',5'-bisphosphate. 2 cysteine pairs are disulfide-bonded: Cys-201–Cys-209 and Cys-222–Cys-228. Adenosine 3',5'-bisphosphate contacts are provided by Tyr-279, Ser-285, Thr-290, and Lys-293.

Belongs to the sulfotransferase 3 family. As to quaternary structure, homotrimer. Interacts with the C5-epimerase GLCE. Post-translationally, N-glycosylated.

Its subcellular location is the golgi apparatus membrane. Functionally, catalyzes the transfer of a sulfo group from 3'-phospho-5'-adenylyl sulfate (PAPS) to the 2-OH position of iduronic acid (IdoA) or glucuronic acid (GlcA) within the heparan sulfate (HS) chain and participates in HS biosynthesis. Required for metanephric development of kidney formation, suggesting that 2-O-sulfation within HS is essential for signaling between ureteric bud and metanephric mesenchyme. This chain is Heparan sulfate 2-O-sulfotransferase 1, found in Cricetulus griseus (Chinese hamster).